The primary structure comprises 678 residues: Dol-P-Man:Man(7)GlcNAc(2)-PP-Dol alpha-1,6-mannosyltransferase (678 aa).

Transmembrane regions (helical) follow at residues Met1–Val21, Phe56–Leu76, Phe81–Ser101, Ile109–Met129, Thr133–Leu153, Ile168–Leu188, Val200–Trp220, Phe252–Ala272, Pro279–Leu299, Phe301–Trp321, and Ala334–Ile354.

This sequence belongs to the glycosyltransferase 22 family.

The protein localises to the endoplasmic reticulum membrane. The catalysed reaction is an alpha-D-Man-(1-&gt;2)-alpha-D-Man-(1-&gt;2)-alpha-D-Man-(1-&gt;3)-[alpha-D-Man-(1-&gt;2)-alpha-D-Man-(1-&gt;3)-alpha-D-Man-(1-&gt;6)]-beta-D-Man-(1-&gt;4)-beta-D-GlcNAc-(1-&gt;4)-alpha-D-GlcNAc-diphospho-di-trans,poly-cis-dolichol + a di-trans,poly-cis-dolichyl beta-D-mannosyl phosphate = an alpha-D-Man-(1-&gt;2)-alpha-D-Man-(1-&gt;2)-alpha-D-Man-(1-&gt;3)-[alpha-D-Man-(1-&gt;2)-alpha-D-Man-(1-&gt;3)-[alpha-D-Man-(1-&gt;6)]-alpha-D-Man-(1-&gt;6)]-beta-D-Man-(1-&gt;4)-beta-D-GlcNAc-(1-&gt;4)-alpha-D-GlcNAc-diphospho-di-trans,poly-cis-dolichol + a di-trans,poly-cis-dolichyl phosphate + H(+). The protein operates within protein modification; protein glycosylation. Mannosyltransferase that operates in the biosynthetic pathway of dolichol-linked oligosaccharides, the glycan precursors employed in protein asparagine (N)-glycosylation. The assembly of dolichol-linked oligosaccharides begins on the cytosolic side of the endoplasmic reticulum membrane and finishes in its lumen. The sequential addition of sugars to dolichol pyrophosphate produces dolichol-linked oligosaccharides containing fourteen sugars, including two GlcNAcs, nine mannoses and three glucoses. Once assembled, the oligosaccharide is transferred from the lipid to nascent proteins by oligosaccharyltransferases. In the lumen of the endoplasmic reticulum, adds the eighth mannose residue in an alpha-1,6 linkage onto Man(7)GlcNAc(2)-PP-dolichol to produce Man(8)GlcNAc(2)-PP-dolichol. This Drosophila melanogaster (Fruit fly) protein is Dol-P-Man:Man(7)GlcNAc(2)-PP-Dol alpha-1,6-mannosyltransferase.